A 503-amino-acid polypeptide reads, in one-letter code: Probable cytosol aminopeptidase (503 aa).

Mn(2+)-binding residues include lysine 270 and aspartate 275. The active site involves lysine 282. Mn(2+)-binding residues include aspartate 293, aspartate 352, and glutamate 354. Arginine 356 is a catalytic residue.

It belongs to the peptidase M17 family. It depends on Mn(2+) as a cofactor.

The protein resides in the cytoplasm. The enzyme catalyses Release of an N-terminal amino acid, Xaa-|-Yaa-, in which Xaa is preferably Leu, but may be other amino acids including Pro although not Arg or Lys, and Yaa may be Pro. Amino acid amides and methyl esters are also readily hydrolyzed, but rates on arylamides are exceedingly low.. It catalyses the reaction Release of an N-terminal amino acid, preferentially leucine, but not glutamic or aspartic acids.. Presumably involved in the processing and regular turnover of intracellular proteins. Catalyzes the removal of unsubstituted N-terminal amino acids from various peptides. The sequence is that of Probable cytosol aminopeptidase from Klebsiella pneumoniae (strain 342).